The chain runs to 1237 residues: Phosphorylase b kinase regulatory subunit alpha, skeletal muscle isoform (1237 aa).

Residues Ser-629, Ser-729, Ser-735, and Ser-758 each carry the phosphoserine modification. Positions 810–840 (LTELYGKVGKIRHWGLIRYISGILRKKVEAL) are calmodulin-binding. Ser-972 carries the post-translational modification Phosphoserine; by autocatalysis. Ser-981 is modified (phosphoserine). A phosphoserine; by autocatalysis mark is found at Ser-985 and Ser-1007. Residue Ser-1018 is modified to Phosphoserine; by PKA. Phosphoserine is present on residues Ser-1020, Ser-1023, and Ser-1030. The tract at residues 1021 to 1069 (TESQPNGGHSLGADLMSPSFLSPGTSVTPSSGSFPGHHTSKDSRQGQWQ) is disordered. A compositionally biased stretch (low complexity) spans 1042 to 1056 (SPGTSVTPSSGSFPG). The tract at residues 1060–1100 (SKDSRQGQWQRRRRLDGALNRVPIGFYQKVWKVLQKCHGLS) is calmodulin-binding. The residue at position 1127 (Ser-1127) is a Phosphoserine. Cys-1234 carries the S-farnesyl cysteine lipid modification.

It belongs to the phosphorylase b kinase regulatory chain family. In terms of assembly, hexadecamer of 4 heterotetramers, each composed of alpha, beta, gamma, and delta subunits. Alpha (PHKA1 or PHKA2) and beta (PHKB) are regulatory subunits, gamma (PHKG1 or PHKG2) is the catalytic subunit, and delta is calmodulin. Post-translationally, phosphorylation of Ser-1018 by PKA stimulates the dephosphorylation of the beta subunit and, thus, reverses the initial stimulation of PHK by the faster beta-subunit phosphorylation by PKA, that occurs in muscle in response to adrenaline. Cys-1234 is farnesylated, but the C-terminal tripeptide is not removed and the cysteine carboxyl is not methylated. As to expression, isoform 1 predominates in muscle, heart, brain and testis. Isoforms 1 and 2 are expressed in similar quantities in the other tissues. Isoform 3 is highly expressed in slow muscle and heart.

It is found in the cell membrane. It participates in glycan biosynthesis; glycogen metabolism. By phosphorylation of various serine residues and by calcium. Its function is as follows. Phosphorylase b kinase catalyzes the phosphorylation of serine in certain substrates, including troponin I. The alpha chain may bind calmodulin. The protein is Phosphorylase b kinase regulatory subunit alpha, skeletal muscle isoform (PHKA1) of Oryctolagus cuniculus (Rabbit).